We begin with the raw amino-acid sequence, 189 residues long: MVWLLAILAYLLGSLSFAILLSQLSGGPDPRACGSGNPGTTNMLRIAGKRLAALTLLGDLGKGLLPVLIAQHAGLGVQQQAWIGLAAVSGHLYPLYFNFRGGKGVATAAGMLLGLYPPAVLPAVAAWLLVFAFTRTSSLAALAATPLCLPLLAWRQPEALLPMLLLYGVIVWRHRGNLHALFAGRERHF.

The next 4 helical transmembrane spans lie at 1–21, 79–99, 113–133, and 151–171; these read MVWLLAILAYLLGSLSFAILL, QQAWIGLAAVSGHLYPLYFNF, LGLYPPAVLPAVAAWLLVFAF, and LLAWRQPEALLPMLLLYGVIV.

Belongs to the PlsY family. In terms of assembly, probably interacts with PlsX.

It is found in the cell inner membrane. The enzyme catalyses an acyl phosphate + sn-glycerol 3-phosphate = a 1-acyl-sn-glycero-3-phosphate + phosphate. It functions in the pathway lipid metabolism; phospholipid metabolism. Functionally, catalyzes the transfer of an acyl group from acyl-phosphate (acyl-PO(4)) to glycerol-3-phosphate (G3P) to form lysophosphatidic acid (LPA). This enzyme utilizes acyl-phosphate as fatty acyl donor, but not acyl-CoA or acyl-ACP. This chain is Glycerol-3-phosphate acyltransferase, found in Azotobacter vinelandii (strain DJ / ATCC BAA-1303).